Reading from the N-terminus, the 444-residue chain is MQVTTEAVSGVARRLNVSVPTSRINEQFEARLKRTAKTAKINGFRPGKVPLSRVRSDFGPGIYQEVVNDIIRDTVFEAIQQEKINAVGMPNIEKVEHKDDALVYEATVEVYPEVEVKAFDTLEVERKAAEINDKDVDAMIENLQKQRQTWAVTKGMAKKDMQVTFDFEGEVDGEKFEGGSAEDFKLVLGSGRMIPGFEDGIIGMKAGEEKVIDVTFPEDYQAANLAGKAAKFKITVKQVEKPKLPEIDAEFLKIFGISEEDGVEKLKADVRKNMEREVRNGLRNQVKQAAFDALVAANEIDVPSAMVAQEIDRQREQMIQQFTQQFGGAGAQSFDKSMLPDELFKEQAEKSVKLGVLVSKVLADAKLEVDQARVDTYIDEMASSYEDPTEVVDYFKNDKQQRAQIEAVVLEDQVVDHILAAAKVTETEVSYDDLLKEQQARQAR.

The 86-residue stretch at 160-245 (DMQVTFDFEG…VKQVEKPKLP (86 aa)) folds into the PPIase FKBP-type domain.

Belongs to the FKBP-type PPIase family. Tig subfamily.

The protein localises to the cytoplasm. The catalysed reaction is [protein]-peptidylproline (omega=180) = [protein]-peptidylproline (omega=0). Involved in protein export. Acts as a chaperone by maintaining the newly synthesized protein in an open conformation. Functions as a peptidyl-prolyl cis-trans isomerase. The chain is Trigger factor from Acinetobacter baylyi (strain ATCC 33305 / BD413 / ADP1).